A 197-amino-acid chain; its full sequence is FMN-dependent NADH:quinone oxidoreductase (197 aa).

FMN-binding positions include Ser-10, 16–18 (SQS), 93–96 (MYNF), and 137–140 (TRGG).

This sequence belongs to the azoreductase type 1 family. As to quaternary structure, homodimer. FMN is required as a cofactor.

The enzyme catalyses 2 a quinone + NADH + H(+) = 2 a 1,4-benzosemiquinone + NAD(+). The catalysed reaction is N,N-dimethyl-1,4-phenylenediamine + anthranilate + 2 NAD(+) = 2-(4-dimethylaminophenyl)diazenylbenzoate + 2 NADH + 2 H(+). Its function is as follows. Quinone reductase that provides resistance to thiol-specific stress caused by electrophilic quinones. Also exhibits azoreductase activity. Catalyzes the reductive cleavage of the azo bond in aromatic azo compounds to the corresponding amines. The polypeptide is FMN-dependent NADH:quinone oxidoreductase (Shewanella loihica (strain ATCC BAA-1088 / PV-4)).